Here is a 110-residue protein sequence, read N- to C-terminus: HIT-like protein CPn_0488/CP_0266/CPj0488/CpB0508 (110 aa).

The HIT domain maps to valine 3 to alanine 110. Positions histidine 95–histidine 99 match the Histidine triad motif motif.

This Chlamydia pneumoniae (Chlamydophila pneumoniae) protein is HIT-like protein CPn_0488/CP_0266/CPj0488/CpB0508.